The chain runs to 82 residues: Small ribosomal subunit protein bS16 (82 aa).

It belongs to the bacterial ribosomal protein bS16 family.

This chain is Small ribosomal subunit protein bS16, found in Pasteurella multocida (strain Pm70).